We begin with the raw amino-acid sequence, 85 residues long: MTDNLNFTMKFDLDKDKEKKAREIIFTVYQSLEEKGYNPTNQFVGYILSGDPTYITSHNNARSLIRQIERDELLEELLKSYLNTK.

The protein belongs to the UPF0297 family.

This is UPF0297 protein Clos_1665 from Alkaliphilus oremlandii (strain OhILAs) (Clostridium oremlandii (strain OhILAs)).